A 241-amino-acid chain; its full sequence is Small ribosomal subunit protein uS2 (241 aa).

Belongs to the universal ribosomal protein uS2 family.

The chain is Small ribosomal subunit protein uS2 from Sodalis glossinidius (strain morsitans).